The chain runs to 79 residues: MNRMGFFLMLTAAVLLTSLVCTEATPADESKVKRARWSRIEGSRLFRHRLPKSSQSTCPYCQISCCPPAYCQPSGCRGP.

The signal sequence occupies residues 1–24 (MNRMGFFLMLTAAVLLTSLVCTEA). Positions 25–52 (TPADESKVKRARWSRIEGSRLFRHRLPK) are excised as a propeptide. Cystine bridges form between Cys-58-Cys-66, Cys-61-Cys-71, and Cys-65-Cys-76. 4 positions are modified to 4-hydroxyproline: Pro-59, Pro-67, Pro-68, and Pro-73.

As to expression, expressed by the venom duct.

The protein localises to the secreted. This chain is Conotoxin ba-2281, found in Conus bayani (Bayan's cone).